A 208-amino-acid polypeptide reads, in one-letter code: FMN-dependent NADH:quinone oxidoreductase (208 aa).

FMN contacts are provided by residues H10, 17 to 19 (SRS), 104 to 107 (MWNL), 148 to 153 (SNGGFY), and D184.

It belongs to the azoreductase type 1 family. As to quaternary structure, homodimer. The cofactor is FMN.

The enzyme catalyses 2 a quinone + NADH + H(+) = 2 a 1,4-benzosemiquinone + NAD(+). It catalyses the reaction N,N-dimethyl-1,4-phenylenediamine + anthranilate + 2 NAD(+) = 2-(4-dimethylaminophenyl)diazenylbenzoate + 2 NADH + 2 H(+). Functionally, quinone reductase that provides resistance to thiol-specific stress caused by electrophilic quinones. Its function is as follows. Also exhibits azoreductase activity. Catalyzes the reductive cleavage of the azo bond in aromatic azo compounds to the corresponding amines. Requires NADH, but not NADPH, as an electron donor for its activity. The enzyme can also reduce a wide range of sulfonated azo dyes. The substrate preference order is methyl Red &gt; Orange II &gt; Ponceau BS &gt; Ponceau S &gt; Orange G &gt; Amaranth. This is FMN-dependent NADH:quinone oxidoreductase from Enterococcus faecalis (strain ATCC 700802 / V583).